Here is a 334-residue protein sequence, read N- to C-terminus: Putative transport protein MTH_1211 (334 aa).

The next 8 membrane-spanning stretches (helical) occupy residues 24–44 (AIVV…AYIV), 60–80 (VSII…LVFT), 84–104 (IINS…PGAG), 131–151 (YVVA…VFLS), 189–209 (VLLS…LMAA), 220–240 (AILL…GPWA), 255–275 (ILRG…DIYL), and 289–309 (MIFL…GFIV).

The protein belongs to the autoinducer-2 exporter (AI-2E) (TC 2.A.86) family.

Its subcellular location is the cell membrane. This chain is Putative transport protein MTH_1211, found in Methanothermobacter thermautotrophicus (strain ATCC 29096 / DSM 1053 / JCM 10044 / NBRC 100330 / Delta H) (Methanobacterium thermoautotrophicum).